The primary structure comprises 783 residues: DNA polymerase II (783 aa).

It belongs to the DNA polymerase type-B family.

The catalysed reaction is DNA(n) + a 2'-deoxyribonucleoside 5'-triphosphate = DNA(n+1) + diphosphate. DNA polymerase II activity is regulated by the lexA gene during the SOS response. Its function is as follows. Thought to be involved in DNA repair and/or mutagenesis. Its processivity is enhanced by the beta sliding clamp (dnaN) and clamp loader. The chain is DNA polymerase II (polB) from Escherichia coli (strain K12).